The chain runs to 57 residues: MIVWNLICPKCGKRLRYKVDVCPCMASEVELPNCPDCGEKMVHDYTSLKGRRRIRRG.

This is an uncharacterized protein from Methanocaldococcus jannaschii (strain ATCC 43067 / DSM 2661 / JAL-1 / JCM 10045 / NBRC 100440) (Methanococcus jannaschii).